Here is a 304-residue protein sequence, read N- to C-terminus: Phosphate transport system permease protein PstA 1 (304 aa).

6 helical membrane passes run 36 to 56 (FFFTSFVVALIPLVWLLWVVI), 96 to 116 (AGVAAVLAVPLGLMTAVYLVE), 132 to 152 (VLAGVPSIVAALFVFSLWIAT), 155 to 175 (FQQSAFAVALALVLLMLPVVV), 204 to 224 (IVRIVAPIAMPGIVSGILLSI), and 276 to 296 (WGAALTLIIVVATINLAAAMI). Residues 89-297 (LYGTLVQAGV…TINLAAAMIR (209 aa)) form the ABC transmembrane type-1 domain.

This sequence belongs to the binding-protein-dependent transport system permease family. CysTW subfamily.

The protein localises to the cell membrane. Its function is as follows. Part of the binding-protein-dependent transport system for phosphate; probably responsible for the translocation of the substrate across the membrane. This Mycobacterium tuberculosis (strain CDC 1551 / Oshkosh) protein is Phosphate transport system permease protein PstA 1 (pstA1).